Consider the following 1127-residue polypeptide: Carbamoyl phosphate synthase large chain (1127 aa).

Positions 1–402 (MPKRTDIKSV…SLGKAMRSID (402 aa)) are carboxyphosphate synthetic domain. Residues Arg129, Arg169, Gly175, Gly176, Glu208, Ile210, Glu215, Gly241, Val242, His243, Gln285, and Glu299 each contribute to the ATP site. An ATP-grasp 1 domain is found at 133 to 328 (KKVVDEAGAE…IAKIATKLAL (196 aa)). Positions 285, 299, and 301 each coordinate Mg(2+). Mn(2+)-binding residues include Gln285, Glu299, and Asn301. Residues 403–551 (KRHMGFNWDG…YYYSCYADET (149 aa)) form an oligomerization domain region. The tract at residues 552-962 (ELRPREREAV…AFAKSQLAAY (411 aa)) is carbamoyl phosphate synthetic domain. The region spanning 681 to 881 (GEVLKKAEMN…LAKAAARIMA (201 aa)) is the ATP-grasp 2 domain. Positions 717, 765, 767, 772, 797, 798, 799, 800, 840, and 852 each coordinate ATP. Residues Gln840, Glu852, and Asn854 each contribute to the Mg(2+) site. Gln840, Glu852, and Asn854 together coordinate Mn(2+). Positions 963 to 1127 (DGGLPTHGNV…QLFELERREF (165 aa)) are allosteric domain. The MGS-like domain maps to 964-1127 (GGLPTHGNVF…QLFELERREF (164 aa)).

Belongs to the CarB family. Composed of two chains; the small (or glutamine) chain promotes the hydrolysis of glutamine to ammonia, which is used by the large (or ammonia) chain to synthesize carbamoyl phosphate. Tetramer of heterodimers (alpha,beta)4. The cofactor is Mg(2+). Mn(2+) is required as a cofactor.

The catalysed reaction is hydrogencarbonate + L-glutamine + 2 ATP + H2O = carbamoyl phosphate + L-glutamate + 2 ADP + phosphate + 2 H(+). It catalyses the reaction hydrogencarbonate + NH4(+) + 2 ATP = carbamoyl phosphate + 2 ADP + phosphate + 2 H(+). It participates in amino-acid biosynthesis; L-arginine biosynthesis; carbamoyl phosphate from bicarbonate: step 1/1. It functions in the pathway pyrimidine metabolism; UMP biosynthesis via de novo pathway; (S)-dihydroorotate from bicarbonate: step 1/3. Functionally, large subunit of the glutamine-dependent carbamoyl phosphate synthetase (CPSase). CPSase catalyzes the formation of carbamoyl phosphate from the ammonia moiety of glutamine, carbonate, and phosphate donated by ATP, constituting the first step of 2 biosynthetic pathways, one leading to arginine and/or urea and the other to pyrimidine nucleotides. The large subunit (synthetase) binds the substrates ammonia (free or transferred from glutamine from the small subunit), hydrogencarbonate and ATP and carries out an ATP-coupled ligase reaction, activating hydrogencarbonate by forming carboxy phosphate which reacts with ammonia to form carbamoyl phosphate. This Bifidobacterium longum (strain DJO10A) protein is Carbamoyl phosphate synthase large chain.